The primary structure comprises 151 residues: MLKSVNILNKRARFDYEIIDTYTAGIVLAGTEIKSIRLGKANITESFCEFSGIELFAINTYIEEYSFGNQFNHKSRSERKLLLNKKELKSLHKSVQAKGLTIVPLKLFTNEKGLAKLQIGLCKGKKNYDKRESLKEQDTKRDLDRIKKAYN.

The protein belongs to the SmpB family.

The protein localises to the cytoplasm. Required for rescue of stalled ribosomes mediated by trans-translation. Binds to transfer-messenger RNA (tmRNA), required for stable association of tmRNA with ribosomes. tmRNA and SmpB together mimic tRNA shape, replacing the anticodon stem-loop with SmpB. tmRNA is encoded by the ssrA gene; the 2 termini fold to resemble tRNA(Ala) and it encodes a 'tag peptide', a short internal open reading frame. During trans-translation Ala-aminoacylated tmRNA acts like a tRNA, entering the A-site of stalled ribosomes, displacing the stalled mRNA. The ribosome then switches to translate the ORF on the tmRNA; the nascent peptide is terminated with the 'tag peptide' encoded by the tmRNA and targeted for degradation. The ribosome is freed to recommence translation, which seems to be the essential function of trans-translation. This Flavobacterium johnsoniae (strain ATCC 17061 / DSM 2064 / JCM 8514 / BCRC 14874 / CCUG 350202 / NBRC 14942 / NCIMB 11054 / UW101) (Cytophaga johnsonae) protein is SsrA-binding protein.